The primary structure comprises 73 residues: MKAGIHPEYKAVNATCSCGNSFVFNSTLDKESIHLDVCDKCHPFYTGKQRIVDTGGRVDRFNKRFGALSSGKK.

The Zn(2+) site is built by Cys-16, Cys-18, Cys-38, and Cys-41.

The protein belongs to the bacterial ribosomal protein bL31 family. Type A subfamily. Part of the 50S ribosomal subunit. The cofactor is Zn(2+).

Functionally, binds the 23S rRNA. The protein is Large ribosomal subunit protein bL31 of Vibrio vulnificus (strain CMCP6).